The chain runs to 360 residues: (+)-6a-hydroxymaackiain 3-O-methyltransferase 1 (360 aa).

S-adenosyl-L-methionine is bound by residues Val-202 to Gly-205, Asp-226, Asp-226 to Gln-227, Asp-246 to Met-247, and Lys-260. The Proton acceptor role is filled by His-264.

The protein belongs to the class I-like SAM-binding methyltransferase superfamily. Cation-independent O-methyltransferase family. COMT subfamily.

It catalyses the reaction (+)-6a-hydroxymaackiain + S-adenosyl-L-methionine = (+)-pisatin + S-adenosyl-L-homocysteine + H(+). The catalysed reaction is a 4'-hydroxyisoflavone + S-adenosyl-L-methionine = a 4'-methoxyisoflavone + S-adenosyl-L-homocysteine + H(+). Functionally, methyltransferase involved in the phytoalexin pisatin biosynthesis. Has both 3- and 4'-O-methyltransferase activities. Can use (+)-6a-hydroxymaackiain, 2,7,4'-trihydroxyisoflavanone and with much less activity (+)-medicarpin as substrates, but not (-)-6a-hydroxymaackiain, daidzein, formononetin or isoliquiritigenin. May be involved in formononetin biosynthesis. In Pisum sativum (Garden pea), this protein is (+)-6a-hydroxymaackiain 3-O-methyltransferase 1 (HMM1).